A 205-amino-acid chain; its full sequence is Myb-related protein 305 (205 aa).

2 HTH myb-type domains span residues 10–62 and 63–117; these read DVEV…LNYL and RPDV…QKHM. DNA-binding regions (H-T-H motif) lie at residues 38 to 62 and 90 to 113; these read WNSL…LNYL and WSKI…RTRI.

Expressed only in flowers.

It localises to the nucleus. In terms of biological role, transcription factor. The protein is Myb-related protein 305 of Antirrhinum majus (Garden snapdragon).